The chain runs to 452 residues: Bifunctional protein GlmU (452 aa).

Residues 1–226 (MKNIHAIILA…KFEIAGVNDK (226 aa)) are pyrophosphorylase. UDP-N-acetyl-alpha-D-glucosamine contacts are provided by residues 9-12 (LAAG), lysine 23, glutamine 73, 78-79 (GT), 100-102 (YGD), glycine 137, glutamate 151, asparagine 166, and asparagine 224. Aspartate 102 is a binding site for Mg(2+). Asparagine 224 is a binding site for Mg(2+). Residues 227–247 (VQLAELERIFQINQATQFMQQ) form a linker region. Residues 248–452 (GLSLKDPNRF…LKNWQRPTKK (205 aa)) are N-acetyltransferase. UDP-N-acetyl-alpha-D-glucosamine is bound by residues arginine 330 and lysine 348. The active-site Proton acceptor is histidine 360. Tyrosine 363 and asparagine 374 together coordinate UDP-N-acetyl-alpha-D-glucosamine. Acetyl-CoA-binding positions include alanine 377, 383 to 384 (NY), serine 402, alanine 420, and arginine 437.

The protein in the N-terminal section; belongs to the N-acetylglucosamine-1-phosphate uridyltransferase family. It in the C-terminal section; belongs to the transferase hexapeptide repeat family. In terms of assembly, homotrimer. It depends on Mg(2+) as a cofactor.

It is found in the cytoplasm. It catalyses the reaction alpha-D-glucosamine 1-phosphate + acetyl-CoA = N-acetyl-alpha-D-glucosamine 1-phosphate + CoA + H(+). The enzyme catalyses N-acetyl-alpha-D-glucosamine 1-phosphate + UTP + H(+) = UDP-N-acetyl-alpha-D-glucosamine + diphosphate. It participates in nucleotide-sugar biosynthesis; UDP-N-acetyl-alpha-D-glucosamine biosynthesis; N-acetyl-alpha-D-glucosamine 1-phosphate from alpha-D-glucosamine 6-phosphate (route II): step 2/2. The protein operates within nucleotide-sugar biosynthesis; UDP-N-acetyl-alpha-D-glucosamine biosynthesis; UDP-N-acetyl-alpha-D-glucosamine from N-acetyl-alpha-D-glucosamine 1-phosphate: step 1/1. It functions in the pathway bacterial outer membrane biogenesis; LPS lipid A biosynthesis. In terms of biological role, catalyzes the last two sequential reactions in the de novo biosynthetic pathway for UDP-N-acetylglucosamine (UDP-GlcNAc). The C-terminal domain catalyzes the transfer of acetyl group from acetyl coenzyme A to glucosamine-1-phosphate (GlcN-1-P) to produce N-acetylglucosamine-1-phosphate (GlcNAc-1-P), which is converted into UDP-GlcNAc by the transfer of uridine 5-monophosphate (from uridine 5-triphosphate), a reaction catalyzed by the N-terminal domain. This Ruthia magnifica subsp. Calyptogena magnifica protein is Bifunctional protein GlmU.